Consider the following 125-residue polypeptide: Nuclear envelope phosphatase-regulatory subunit 1 (125 aa).

The residue at position 1 (methionine 1) is an N-acetylmethionine. 2 helical membrane passes run 33 to 53 (MLLIVVSVCTATGAWNWLIDP) and 65 to 85 (WNHPFFTISCITLIGLFFAGI).

Belongs to the CNEP1R1 family. In terms of assembly, interacts with CTDNEP1; the complex dephosphorylates LPIN1 and LPIN2.

The protein resides in the nucleus membrane. Its subcellular location is the cytoplasm. In terms of biological role, forms with the serine/threonine protein phosphatase CTDNEP1 an active complex which dephosphorylates and may activate LPIN1 and LPIN2. LPIN1 and LPIN2 are phosphatidate phosphatases that catalyze the conversion of phosphatidic acid to diacylglycerol and control the metabolism of fatty acids at different levels. May indirectly modulate the lipid composition of nuclear and/or endoplasmic reticulum membranes and be required for proper nuclear membrane morphology and/or dynamics. May also indirectly regulate the production of lipid droplets and triacylglycerol. This is Nuclear envelope phosphatase-regulatory subunit 1 (CNEP1R1) from Bos taurus (Bovine).